Consider the following 170-residue polypeptide: Phosphopantetheine adenylyltransferase (170 aa).

Thr10 provides a ligand contact to substrate. ATP-binding positions include 10-11 and His18; that span reads TF. Positions 42, 75, and 89 each coordinate substrate. ATP contacts are provided by residues 90–92, Glu100, and 125–131; these read GVR and YTYVASS.

This sequence belongs to the bacterial CoaD family. Homohexamer. Mg(2+) is required as a cofactor.

It localises to the cytoplasm. The catalysed reaction is (R)-4'-phosphopantetheine + ATP + H(+) = 3'-dephospho-CoA + diphosphate. It participates in cofactor biosynthesis; coenzyme A biosynthesis; CoA from (R)-pantothenate: step 4/5. Reversibly transfers an adenylyl group from ATP to 4'-phosphopantetheine, yielding dephospho-CoA (dPCoA) and pyrophosphate. The polypeptide is Phosphopantetheine adenylyltransferase (Chlorobium limicola (strain DSM 245 / NBRC 103803 / 6330)).